The following is a 275-amino-acid chain: Small ribosomal subunit protein uS3 (275 aa).

The KH type-2 domain occupies 38–106 (IRKLLATGLE…QVQLNILEVK (69 aa)). Positions 215 to 275 (AAAAPASDRP…AEAPAESTES (61 aa)) are disordered. Over residues 237-275 (SGSAGTTATSTEAGRAATSDAPAAGTAAAAEAPAESTES) the composition is skewed to low complexity.

The protein belongs to the universal ribosomal protein uS3 family. In terms of assembly, part of the 30S ribosomal subunit. Forms a tight complex with proteins S10 and S14.

Its function is as follows. Binds the lower part of the 30S subunit head. Binds mRNA in the 70S ribosome, positioning it for translation. The chain is Small ribosomal subunit protein uS3 from Mycolicibacterium smegmatis (strain ATCC 700084 / mc(2)155) (Mycobacterium smegmatis).